A 99-amino-acid chain; its full sequence is Small ribosomal subunit protein uS19c (99 aa).

It belongs to the universal ribosomal protein uS19 family.

It is found in the plastid. Its subcellular location is the chloroplast. Functionally, protein S19 forms a complex with S13 that binds strongly to the 16S ribosomal RNA. The polypeptide is Small ribosomal subunit protein uS19c (Oenothera biennis (German evening primrose)).